Reading from the N-terminus, the 37-residue chain is Large ribosomal subunit protein bL36 (37 aa).

This sequence belongs to the bacterial ribosomal protein bL36 family.

This chain is Large ribosomal subunit protein bL36, found in Micrococcus luteus (strain ATCC 4698 / DSM 20030 / JCM 1464 / CCM 169 / CCUG 5858 / IAM 1056 / NBRC 3333 / NCIMB 9278 / NCTC 2665 / VKM Ac-2230) (Micrococcus lysodeikticus).